The chain runs to 104 residues: Large ribosomal subunit protein bL21 (104 aa).

Belongs to the bacterial ribosomal protein bL21 family. As to quaternary structure, part of the 50S ribosomal subunit. Contacts protein L20.

Functionally, this protein binds to 23S rRNA in the presence of protein L20. This is Large ribosomal subunit protein bL21 from Azobacteroides pseudotrichonymphae genomovar. CFP2.